Consider the following 191-residue polypeptide: 2-amino-4-hydroxy-6-hydroxymethyldihydropteridine pyrophosphokinase (191 aa).

The protein belongs to the HPPK family.

The catalysed reaction is 6-hydroxymethyl-7,8-dihydropterin + ATP = (7,8-dihydropterin-6-yl)methyl diphosphate + AMP + H(+). It participates in cofactor biosynthesis; tetrahydrofolate biosynthesis; 2-amino-4-hydroxy-6-hydroxymethyl-7,8-dihydropteridine diphosphate from 7,8-dihydroneopterin triphosphate: step 4/4. Its function is as follows. Catalyzes the transfer of pyrophosphate from adenosine triphosphate (ATP) to 6-hydroxymethyl-7,8-dihydropterin, an enzymatic step in folate biosynthesis pathway. This is 2-amino-4-hydroxy-6-hydroxymethyldihydropteridine pyrophosphokinase (folK) from Mycobacterium leprae (strain TN).